The chain runs to 411 residues: Dihydrosphingosine 1-phosphate phosphatase C823.11 (411 aa).

Topologically, residues Met-1 to Thr-74 are lumenal. Residues Leu-75–Tyr-95 traverse the membrane as a helical segment. Topologically, residues Tyr-96–Asp-99 are cytoplasmic. The helical transmembrane segment at Ile-100–Leu-120 threads the bilayer. Positions Lys-115–Pro-123 are phosphatase sequence motif I. At Pro-121–Ser-170 the chain is on the lumenal side. The tract at residues Pro-144–His-147 is phosphatase sequence motif II. His-147 serves as the catalytic Proton donor. A helical membrane pass occupies residues Ser-171–Gly-191. Positions Gly-191–Asp-202 are phosphatase sequence motif III. Topologically, residues Arg-192–Cys-195 are cytoplasmic. Residues Gly-196–Phe-216 traverse the membrane as a helical segment. His-198 acts as the Nucleophile in catalysis. Topologically, residues Gln-217–Thr-233 are lumenal. Residues Ser-234–Ala-254 form a helical membrane-spanning segment. At Glu-255–Cys-259 the chain is on the cytoplasmic side. A helical membrane pass occupies residues Leu-260–Ala-280. The Lumenal portion of the chain corresponds to Ser-281 to Asn-293. Residues Ser-294 to Trp-314 form a helical membrane-spanning segment. The Cytoplasmic portion of the chain corresponds to Lys-315–Arg-387. A helical transmembrane segment spans residues Ile-388 to Lys-408. Topologically, residues Trp-409–Ile-411 are lumenal.

The protein belongs to the type 2 lipid phosphate phosphatase family.

Its subcellular location is the endoplasmic reticulum membrane. Functionally, dihydrosphingosine 1-phosphate phosphatase required for efficient ceramide synthesis from exogenous sphingoid bases. Involved in endocytosis and calcium-mediated signaling. The chain is Dihydrosphingosine 1-phosphate phosphatase C823.11 from Schizosaccharomyces pombe (strain 972 / ATCC 24843) (Fission yeast).